We begin with the raw amino-acid sequence, 1508 residues long: ABC-type transporter oblD (1508 aa).

Disordered regions lie at residues 1 to 35 and 54 to 82; these read MSLGPGGFEATPNSVMPSDASLHNQSHHTDSLTNN and KYTQNSVYSTTSQNPFAAEPGSKLDPNGG. The segment covering 11–24 has biased composition (polar residues); sequence TPNSVMPSDASLHN. N-linked (GlcNAc...) asparagine glycans are attached at residues Asn24 and Asn35. Polar residues predominate over residues 55-68; that stretch reads YTQNSVYSTTSQNP. Residues Asn83, Asn231, and Asn314 are each glycosylated (N-linked (GlcNAc...) asparagine). Positions 136 to 390 constitute an ABC transporter 1 domain; the sequence is LEAVGLVRKL…FLNMGFVCPD (255 aa). 5 helical membrane-spanning segments follow: residues 501–521, 536–556, 610–630, 643–663, and 752–772; these read ITISSAMGNAIIALIISSMFF, LLFFAIVINAFSSGLEMLTLY, GNFFFFVFTSFVLTLTMSMFF, ALPFAAILITGLTMYTGFTIP, and GIIFAFMVILCAIYLVASDFI. Positions 828–1070 constitute an ABC transporter 2 domain; the sequence is FQWKDICYDI…ILIDYFTRNG (243 aa). 864 to 871 provides a ligand contact to ATP; sequence GVSGAGKT. 4 helical membrane-spanning segments follow: residues 1172–1192, 1206–1226, 1296–1316, and 1322–1342; these read YIYSKAFLCVSTSLYVGFSLY, FAIFTLFFLFGQFIQQIMPHF, LFVWVFLMFASTFAHFMIAAL, and AGNMGNLLFTLCVIFCGILTT. Asn1390 carries N-linked (GlcNAc...) asparagine glycosylation. A helical transmembrane segment spans residues 1443–1463; the sequence is FGLMWVFVVFNAFAACGLYYW.

The protein belongs to the ABC transporter superfamily. ABCG family. PDR (TC 3.A.1.205) subfamily.

It localises to the cell membrane. In terms of biological role, ABC-type transporter; part of the gene cluster that mediates the biosynthesis of the sesterterpenes ophiobolins, fungal phytotoxins with potential anti-cancer activities. Acts as a specific transporter involved in ophiobolins secretion. The protein is ABC-type transporter oblD of Cochliobolus heterostrophus (strain C5 / ATCC 48332 / race O) (Southern corn leaf blight fungus).